A 187-amino-acid polypeptide reads, in one-letter code: dTTP/UTP pyrophosphatase (187 aa).

Residue Asp-72 is the Proton acceptor of the active site.

The protein belongs to the Maf family. YhdE subfamily. It depends on a divalent metal cation as a cofactor.

It localises to the cytoplasm. The catalysed reaction is dTTP + H2O = dTMP + diphosphate + H(+). The enzyme catalyses UTP + H2O = UMP + diphosphate + H(+). Functionally, nucleoside triphosphate pyrophosphatase that hydrolyzes dTTP and UTP. May have a dual role in cell division arrest and in preventing the incorporation of modified nucleotides into cellular nucleic acids. The protein is dTTP/UTP pyrophosphatase of Vibrio cholerae serotype O1 (strain ATCC 39315 / El Tor Inaba N16961).